We begin with the raw amino-acid sequence, 202 residues long: Histone chaperone ASF1B (202 aa).

The interval 1-155 is interaction with CHAF1B; it reads MAKVSVLNVA…VTRFHINWDN (155 aa). The interaction with histone H3 stretch occupies residues 1–156; it reads MAKVSVLNVA…TRFHINWDNN (156 aa). At S198 the chain carries Phosphoserine; by TLK2.

The protein belongs to the ASF1 family. Interacts with histone H3 (via C-terminus), including histone H3.1, H3.2 and H3.3, and histone H4; the interaction with H3 is direct. Interacts with the CHAF1A, CHAF1B and RBBP4 subunits of the CAF-1 complex. Interacts with HAT1, NASP and TAF1. Found in a soluble complex with NASP and histones H3 and H4; the interaction with NASP is probably indirect and mediated by H3-H4. Interacts with CDAN1. Found in a cytosolic complex with IPO4 and histones H3 and H4. Interacts with CREBBP. Phosphorylated by TLK1 and TLK2. Highly expressed in testis and at lower levels in colon, small intestine and thymus.

It localises to the nucleus. Its subcellular location is the cytoplasm. It is found in the cytosol. In terms of biological role, histone chaperone that facilitates histone deposition and histone exchange and removal during nucleosome assembly and disassembly. Cooperates with chromatin assembly factor 1 (CAF-1) to promote replication-dependent chromatin assembly. Also involved in the nuclear import of the histone H3-H4 dimer together with importin-4 (IPO4): specifically recognizes and binds newly synthesized histones with the monomethylation of H3 'Lys-9' (H3K9me1) and diacetylation at 'Lys-5' and 'Lys-12' of H4 (H4K5K12ac) marks in the cytosol. Does not participate in replication-independent nucleosome deposition which is mediated by ASF1A and HIRA. Required for gonad development. This chain is Histone chaperone ASF1B, found in Homo sapiens (Human).